Here is a 217-residue protein sequence, read N- to C-terminus: Ribosomal RNA small subunit methyltransferase G (217 aa).

Residues glycine 79, leucine 84, 130 to 131 (IE), and arginine 148 contribute to the S-adenosyl-L-methionine site.

Belongs to the methyltransferase superfamily. RNA methyltransferase RsmG family.

Its subcellular location is the cytoplasm. It carries out the reaction guanosine(527) in 16S rRNA + S-adenosyl-L-methionine = N(7)-methylguanosine(527) in 16S rRNA + S-adenosyl-L-homocysteine. In terms of biological role, specifically methylates the N7 position of guanine in position 527 of 16S rRNA. The polypeptide is Ribosomal RNA small subunit methyltransferase G (Desulfotalea psychrophila (strain LSv54 / DSM 12343)).